The following is a 390-amino-acid chain: LL-diaminopimelate aminotransferase 2 (390 aa).

Positions 13 and 38 each coordinate substrate. Pyridoxal 5'-phosphate contacts are provided by residues Y67, 102 to 103 (SK), Y127, N177, Y208, and 236 to 238 (SLS). Residues K103, Y127, and N177 each contribute to the substrate site. The residue at position 239 (K239) is an N6-(pyridoxal phosphate)lysine. Residue R247 coordinates pyridoxal 5'-phosphate. Position 365 (R365) interacts with substrate.

It belongs to the class-I pyridoxal-phosphate-dependent aminotransferase family. LL-diaminopimelate aminotransferase subfamily. In terms of assembly, homodimer. Requires pyridoxal 5'-phosphate as cofactor.

It carries out the reaction (2S,6S)-2,6-diaminopimelate + 2-oxoglutarate = (S)-2,3,4,5-tetrahydrodipicolinate + L-glutamate + H2O + H(+). It functions in the pathway amino-acid biosynthesis; L-lysine biosynthesis via DAP pathway; LL-2,6-diaminopimelate from (S)-tetrahydrodipicolinate (aminotransferase route): step 1/1. Functionally, involved in the synthesis of meso-diaminopimelate (m-DAP or DL-DAP), required for both lysine and peptidoglycan biosynthesis. Catalyzes the direct conversion of tetrahydrodipicolinate to LL-diaminopimelate. In Trichormus variabilis (strain ATCC 29413 / PCC 7937) (Anabaena variabilis), this protein is LL-diaminopimelate aminotransferase 2.